The following is a 113-amino-acid chain: Cysteine proteinase inhibitor 6 (113 aa).

Positions 1 to 18 are cleaved as a signal peptide; that stretch reads MAMTTRTLLLAAVCAAAA. Residues 65–69 carry the Secondary area of contact motif; sequence QVVSG.

The protein belongs to the cystatin family. Phytocystatin subfamily.

Its subcellular location is the secreted. Specific inhibitor of cysteine proteinases. Probably involved in the regulation of endogenous processes and in defense against pests and pathogens. This chain is Cysteine proteinase inhibitor 6, found in Oryza sativa subsp. japonica (Rice).